The sequence spans 355 residues: 3-dehydroquinate synthase (355 aa).

NAD(+) contacts are provided by residues 71–76 (EGEERK), 105–109 (GVVGD), 129–130 (TS), lysine 142, and lysine 151. Residues glutamate 184, histidine 246, and histidine 263 each contribute to the Zn(2+) site.

It belongs to the sugar phosphate cyclases superfamily. Dehydroquinate synthase family. The cofactor is Co(2+). Zn(2+) serves as cofactor. It depends on NAD(+) as a cofactor.

It is found in the cytoplasm. It carries out the reaction 7-phospho-2-dehydro-3-deoxy-D-arabino-heptonate = 3-dehydroquinate + phosphate. Its pathway is metabolic intermediate biosynthesis; chorismate biosynthesis; chorismate from D-erythrose 4-phosphate and phosphoenolpyruvate: step 2/7. Catalyzes the conversion of 3-deoxy-D-arabino-heptulosonate 7-phosphate (DAHP) to dehydroquinate (DHQ). The polypeptide is 3-dehydroquinate synthase (Streptococcus pneumoniae (strain 70585)).